Reading from the N-terminus, the 98-residue chain is Growth-regulated protein homolog gamma (98 aa).

A signal peptide spans 1–29 (MAPAASSAPRLLRAAMLLLLLVAAGRRAA). 2 disulfides stabilise this stretch: Cys-39-Cys-65 and Cys-41-Cys-81.

This sequence belongs to the intercrine alpha (chemokine CxC) family.

It localises to the secreted. In Bos taurus (Bovine), this protein is Growth-regulated protein homolog gamma.